The sequence spans 380 residues: Crotonobetainyl-CoA reductase (380 aa).

This sequence belongs to the acyl-CoA dehydrogenase family. As to quaternary structure, homotetramer. The cofactor is FAD.

The protein localises to the cytoplasm. The catalysed reaction is 4-(trimethylamino)butanoyl-CoA + oxidized [electron-transfer flavoprotein] + H(+) = crotonobetainyl-CoA + reduced [electron-transfer flavoprotein]. It functions in the pathway amine and polyamine metabolism; carnitine metabolism. In terms of biological role, catalyzes the reduction of crotonobetainyl-CoA to gamma-butyrobetainyl-CoA. The polypeptide is Crotonobetainyl-CoA reductase (Proteus sp. (strain LE138)).